The chain runs to 554 residues: Glucose-6-phosphate isomerase (554 aa).

The Proton donor role is filled by Glu-358. Residues His-389 and Lys-515 contribute to the active site. A compositionally biased stretch (polar residues) spans 527–540 (SDGSPQRQSDSSTD). The tract at residues 527–554 (SDGSPQRQSDSSTDALVRRYRTQRGRTG) is disordered. The segment covering 544–554 (RRYRTQRGRTG) has biased composition (basic residues).

It belongs to the GPI family.

The protein localises to the cytoplasm. It carries out the reaction alpha-D-glucose 6-phosphate = beta-D-fructose 6-phosphate. It functions in the pathway carbohydrate biosynthesis; gluconeogenesis. It participates in carbohydrate degradation; glycolysis; D-glyceraldehyde 3-phosphate and glycerone phosphate from D-glucose: step 2/4. Its function is as follows. Catalyzes the reversible isomerization of glucose-6-phosphate to fructose-6-phosphate. The sequence is that of Glucose-6-phosphate isomerase from Mycobacterium ulcerans (strain Agy99).